A 58-amino-acid polypeptide reads, in one-letter code: Large ribosomal subunit protein uL24 (58 aa).

It belongs to the universal ribosomal protein uL24 family. In terms of assembly, part of the 50S ribosomal subunit.

In terms of biological role, one of two assembly initiator proteins, it binds directly to the 5'-end of the 23S rRNA, where it nucleates assembly of the 50S subunit. Its function is as follows. One of the proteins that surrounds the polypeptide exit tunnel on the outside of the subunit. This is Large ribosomal subunit protein uL24 (rplX) from Spiroplasma citri.